Here is a 251-residue protein sequence, read N- to C-terminus: Imidazole glycerol phosphate synthase subunit HisF (251 aa).

Catalysis depends on residues Asp-12 and Asp-131.

The protein belongs to the HisA/HisF family. In terms of assembly, heterodimer of HisH and HisF.

The protein resides in the cytoplasm. The catalysed reaction is 5-[(5-phospho-1-deoxy-D-ribulos-1-ylimino)methylamino]-1-(5-phospho-beta-D-ribosyl)imidazole-4-carboxamide + L-glutamine = D-erythro-1-(imidazol-4-yl)glycerol 3-phosphate + 5-amino-1-(5-phospho-beta-D-ribosyl)imidazole-4-carboxamide + L-glutamate + H(+). Its pathway is amino-acid biosynthesis; L-histidine biosynthesis; L-histidine from 5-phospho-alpha-D-ribose 1-diphosphate: step 5/9. IGPS catalyzes the conversion of PRFAR and glutamine to IGP, AICAR and glutamate. The HisF subunit catalyzes the cyclization activity that produces IGP and AICAR from PRFAR using the ammonia provided by the HisH subunit. The sequence is that of Imidazole glycerol phosphate synthase subunit HisF from Helicobacter hepaticus (strain ATCC 51449 / 3B1).